Reading from the N-terminus, the 291-residue chain is ATP synthase gamma chain (291 aa).

The protein belongs to the ATPase gamma chain family. In terms of assembly, F-type ATPases have 2 components, CF(1) - the catalytic core - and CF(0) - the membrane proton channel. CF(1) has five subunits: alpha(3), beta(3), gamma(1), delta(1), epsilon(1). CF(0) has three main subunits: a, b and c.

Its subcellular location is the cell inner membrane. In terms of biological role, produces ATP from ADP in the presence of a proton gradient across the membrane. The gamma chain is believed to be important in regulating ATPase activity and the flow of protons through the CF(0) complex. The chain is ATP synthase gamma chain from Xanthobacter autotrophicus (strain ATCC BAA-1158 / Py2).